A 258-amino-acid polypeptide reads, in one-letter code: Indole-3-glycerol phosphate synthase (258 aa).

This sequence belongs to the TrpC family.

It carries out the reaction 1-(2-carboxyphenylamino)-1-deoxy-D-ribulose 5-phosphate + H(+) = (1S,2R)-1-C-(indol-3-yl)glycerol 3-phosphate + CO2 + H2O. It participates in amino-acid biosynthesis; L-tryptophan biosynthesis; L-tryptophan from chorismate: step 4/5. This Campylobacter jejuni subsp. doylei (strain ATCC BAA-1458 / RM4099 / 269.97) protein is Indole-3-glycerol phosphate synthase.